The primary structure comprises 240 residues: Tetraspanin-1 (240 aa).

The Cytoplasmic portion of the chain corresponds to 1 to 9 (MQCFSFIKT). A helical transmembrane segment spans residues 10 to 30 (IMILFNLLIFLCGAALLAVGI). The Extracellular portion of the chain corresponds to 31–52 (WVSIDGASFLKIFGPLSSSAMQ). A helical membrane pass occupies residues 53-73 (FVNVGYFLIAAGAVVFALGFL). At 74-88 (GCYGAQTESKCALMT) the chain is on the cytoplasmic side. A helical transmembrane segment spans residues 89–109 (FFFILLLIFIAEVAAAVVALV). Residues 110-210 (YTTMAEHFLT…QQLLYDIRTN (101 aa)) are Extracellular-facing. The N-linked (GlcNAc...) asparagine glycan is linked to Asn154. The chain crosses the membrane as a helical span at residues 211–231 (AVTVGGVAAGIGGLELAAMIV). Residues 232-240 (SMYLYCNLQ) lie on the Cytoplasmic side of the membrane.

Belongs to the tetraspanin (TM4SF) family. In terms of assembly, interacts with SLC19A2. Interacts with NTRK1/TRKA.

Its subcellular location is the lysosome membrane. Its function is as follows. Structural component of specialized membrane microdomains known as tetraspanin-enriched microdomains (TERMs), which act as platforms for receptor clustering and signaling. Participates thereby in diverse biological functions such as cell signal transduction, adhesion, migration and protein trafficking. Regulates neuronal differentiation in response to NGF by facilitating NGF-mediated activation of NTRK1/TRKA receptor tyrosine kinase and subsequent downstream signaling pathways. Plays a role in the inhibition of TNFalpha-induced apoptosis. Mechanistically, inhibits the NF-kappa-B signaling pathway by blocking phosphorylation of CHUK. Also promotes the stability of the thiamine transporter 1/SLC19A2 in intestinal epithelial cells leading to an increase of thiamine uptake process. In Macaca fascicularis (Crab-eating macaque), this protein is Tetraspanin-1 (TSPAN1).